The following is a 281-amino-acid chain: Undecaprenyl-diphosphatase (281 aa).

8 helical membrane-spanning segments follow: residues 4-24, 45-65, 89-109, 113-133, 152-172, 190-210, 225-245, and 257-277; these read IEIL…WLPI, AFMS…VMVI, WLKV…DDWF, FHNM…FIYL, LPYT…LPGT, SVVT…ASAL, GQLF…MVAI, and FTLF…YSFV.

It belongs to the UppP family.

Its subcellular location is the cell membrane. The enzyme catalyses di-trans,octa-cis-undecaprenyl diphosphate + H2O = di-trans,octa-cis-undecaprenyl phosphate + phosphate + H(+). Functionally, catalyzes the dephosphorylation of undecaprenyl diphosphate (UPP). Confers resistance to bacitracin. The polypeptide is Undecaprenyl-diphosphatase (Streptococcus pneumoniae (strain Hungary19A-6)).